We begin with the raw amino-acid sequence, 194 residues long: ATP-dependent Clp protease proteolytic subunit (194 aa).

Ser98 functions as the Nucleophile in the catalytic mechanism. Residue His123 is part of the active site.

It belongs to the peptidase S14 family. Fourteen ClpP subunits assemble into 2 heptameric rings which stack back to back to give a disk-like structure with a central cavity, resembling the structure of eukaryotic proteasomes.

The protein localises to the cytoplasm. It catalyses the reaction Hydrolysis of proteins to small peptides in the presence of ATP and magnesium. alpha-casein is the usual test substrate. In the absence of ATP, only oligopeptides shorter than five residues are hydrolyzed (such as succinyl-Leu-Tyr-|-NHMec, and Leu-Tyr-Leu-|-Tyr-Trp, in which cleavage of the -Tyr-|-Leu- and -Tyr-|-Trp bonds also occurs).. Its function is as follows. Cleaves peptides in various proteins in a process that requires ATP hydrolysis. Has a chymotrypsin-like activity. Plays a major role in the degradation of misfolded proteins. The chain is ATP-dependent Clp protease proteolytic subunit from Aliarcobacter butzleri (strain RM4018) (Arcobacter butzleri).